Reading from the N-terminus, the 280-residue chain is Bifunctional protein FolD (280 aa).

NADP(+)-binding positions include 165-167 (GRS), serine 190, and isoleucine 231.

Belongs to the tetrahydrofolate dehydrogenase/cyclohydrolase family. As to quaternary structure, homodimer.

The catalysed reaction is (6R)-5,10-methylene-5,6,7,8-tetrahydrofolate + NADP(+) = (6R)-5,10-methenyltetrahydrofolate + NADPH. It catalyses the reaction (6R)-5,10-methenyltetrahydrofolate + H2O = (6R)-10-formyltetrahydrofolate + H(+). It participates in one-carbon metabolism; tetrahydrofolate interconversion. Its function is as follows. Catalyzes the oxidation of 5,10-methylenetetrahydrofolate to 5,10-methenyltetrahydrofolate and then the hydrolysis of 5,10-methenyltetrahydrofolate to 10-formyltetrahydrofolate. The protein is Bifunctional protein FolD of Moorella thermoacetica (strain ATCC 39073 / JCM 9320).